Reading from the N-terminus, the 310-residue chain is Methionyl-tRNA formyltransferase (310 aa).

A (6S)-5,6,7,8-tetrahydrofolate-binding site is contributed by 109-112 (SLLP).

This sequence belongs to the Fmt family.

It carries out the reaction L-methionyl-tRNA(fMet) + (6R)-10-formyltetrahydrofolate = N-formyl-L-methionyl-tRNA(fMet) + (6S)-5,6,7,8-tetrahydrofolate + H(+). Functionally, attaches a formyl group to the free amino group of methionyl-tRNA(fMet). The formyl group appears to play a dual role in the initiator identity of N-formylmethionyl-tRNA by promoting its recognition by IF2 and preventing the misappropriation of this tRNA by the elongation apparatus. The protein is Methionyl-tRNA formyltransferase of Pseudomonas putida (strain W619).